Consider the following 218-residue polypeptide: DNA replication complex GINS protein psf3 (218 aa).

The span at 147–163 shows a compositional bias: gly residues; it reads GGGSSYHGRDGGGAGGK. Positions 147–182 are disordered; that stretch reads GGGSSYHGRDGGGAGGKGKGKATKDDNASNLGVGGA.

Belongs to the GINS3/PSF3 family. As to quaternary structure, component of the GINS complex which is a heterotetramer of div-26/sld5, drc-1/psf1, drc-2/psf2 and drc-3/psf3.

The protein resides in the nucleus. In terms of biological role, the GINS complex plays an essential role in the initiation of DNA replication. The protein is DNA replication complex GINS protein psf3 (drc-3) of Neurospora crassa (strain ATCC 24698 / 74-OR23-1A / CBS 708.71 / DSM 1257 / FGSC 987).